The chain runs to 279 residues: H-2 class II histocompatibility antigen gamma chain (279 aa).

The disordered stretch occupies residues 1–23 (MDDQRDLISNHEQLPILGNRPRE). Over 1–29 (MDDQRDLISNHEQLPILGNRPREPERCSR) the chain is Cytoplasmic. Ser9 is subject to Phosphoserine. The helical; Signal-anchor for type II membrane protein transmembrane segment at 30–55 (GALYTGVSVLVALLLAGQATTAYFLY) threads the bilayer. Over 56–279 (QQQGRLDKLT…TRQELGQVTL (224 aa)) the chain is Extracellular. Residues Asn113 and Asn119 are each glycosylated (N-linked (GlcNAc...) asparagine). In terms of domain architecture, Thyroglobulin type-1 spans 193–254 (LTKCQEEVSH…HTKSRGRHNC (62 aa)). 3 disulfides stabilise this stretch: Cys196–Cys215, Cys226–Cys233, and Cys235–Cys254. The O-linked (Xyl...) (chondroitin sulfate) serine glycan is linked to Ser265.

In terms of assembly, nonamer composed of three alpha/beta/gamma heterotrimers. Interacts with CD44; this complex is essential for the MIF-induced signaling cascade that results in B cell survival. As to quaternary structure, interacts with the mature form of CTSL; the complex survive in neutral pH environment. As to expression, expressed in thymus and lymph noodes. Expressed by antigen-presenting cells (APCs). In terms of tissue distribution, expressed in thymus and lymph noodes.

Its subcellular location is the late endosome. The protein resides in the lysosome. It is found in the cell membrane. It localises to the endoplasmic reticulum membrane. The protein localises to the golgi apparatus. Its subcellular location is the trans-Golgi network. The protein resides in the endosome. It is found in the secreted. In terms of biological role, plays a critical role in MHC class II antigen processing by stabilizing peptide-free class II alpha/beta heterodimers in a complex soon after their synthesis and directing transport of the complex from the endoplasmic reticulum to compartments where peptide loading of class II takes place. Enhance also the stimulation of T-cell responses through interaction with CD44. Stabilizes the conformation of mature CTSL by binding to its active site and serving as a chaperone to help maintain a pool of mature enzyme in endocytic compartments and extracellular space of antigen-presenting cells (APCs). Its function is as follows. Binds to the peptide-binding site of MHC class II alpha/beta heterodimers forming an alpha-beta-CLIP complex, thereby preventing the loading of antigenic peptides to the MHC class II complex until its release by HLA-DM in the endosome. The chain is H-2 class II histocompatibility antigen gamma chain from Mus musculus (Mouse).